Here is a 178-residue protein sequence, read N- to C-terminus: ATP synthase subunit delta (178 aa).

Belongs to the ATPase delta chain family. As to quaternary structure, F-type ATPases have 2 components, F(1) - the catalytic core - and F(0) - the membrane proton channel. F(1) has five subunits: alpha(3), beta(3), gamma(1), delta(1), epsilon(1). F(0) has three main subunits: a(1), b(2) and c(10-14). The alpha and beta chains form an alternating ring which encloses part of the gamma chain. F(1) is attached to F(0) by a central stalk formed by the gamma and epsilon chains, while a peripheral stalk is formed by the delta and b chains.

Its subcellular location is the cell inner membrane. F(1)F(0) ATP synthase produces ATP from ADP in the presence of a proton or sodium gradient. F-type ATPases consist of two structural domains, F(1) containing the extramembraneous catalytic core and F(0) containing the membrane proton channel, linked together by a central stalk and a peripheral stalk. During catalysis, ATP synthesis in the catalytic domain of F(1) is coupled via a rotary mechanism of the central stalk subunits to proton translocation. Its function is as follows. This protein is part of the stalk that links CF(0) to CF(1). It either transmits conformational changes from CF(0) to CF(1) or is implicated in proton conduction. The sequence is that of ATP synthase subunit delta from Nitrosococcus oceani (strain ATCC 19707 / BCRC 17464 / JCM 30415 / NCIMB 11848 / C-107).